An 847-amino-acid polypeptide reads, in one-letter code: Follistatin-related protein 5 (847 aa).

The first 20 residues, 1–20 (MFKCWSVVLVLGFIFLESEG), serve as a signal peptide directing secretion. One can recognise a Kazal-like domain in the interval 83 to 135 (GQAECACMDLCKRHYKPVCGSDGEFYENHCEVHRAACLKKQKITIVHNEDCFF). 3 disulfide bridges follow: Cys89-Cys119, Cys93-Cys112, and Cys101-Cys133. EF-hand domains follow at residues 175–210 (RKKL…EELG) and 211–246 (KDLF…QVIQ). Ca(2+) contacts are provided by Asp188, Asp190, Asn192, Glu199, Asp226, Asn228, Asp230, His232, and Glu237. Ig-like domains are found at residues 250–337 (PEDQ…IFQV) and 341–426 (PVIR…EDIS). 2 disulfides stabilise this stretch: Cys270/Cys321 and Cys362/Cys413. N-linked (GlcNAc...) asparagine glycans are attached at residues Asn318 and Asn394.

It is found in the secreted. This Homo sapiens (Human) protein is Follistatin-related protein 5 (FSTL5).